A 161-amino-acid polypeptide reads, in one-letter code: Extracellular giant hemoglobin major globin subunit B1 (161 aa).

Residues 1-16 (MTILVLFLSCAALASA) form the signal peptide. The Globin domain occupies 18–161 (CCSRGDAEVV…YIAAGIGAGL (144 aa)). Cys-19 and Cys-149 are disulfide-bonded. His-112 contacts heme b.

Belongs to the globin family. As to quaternary structure, the 400 kDa hemoglobin consists of a spherical 24-mer arranged as a double layer of dome-shaped dodecamers. Each dodecamer is composed of the 3-fold trimer of the tetramer A1-A2-B1-B2 having one intra-tetramer (A1-B2) disulfide bond and one inter-tetramer (B1-B2) disulfide bond per tetramer.

The protein localises to the secreted. In terms of biological role, the extracellular giant hemoglobin is able to bind and transport oxygen and sulfide simultaneously and reversibly at two different sites. This is Extracellular giant hemoglobin major globin subunit B1 (ghbB1) from Oligobrachia mashikoi (Beard worm).